A 175-amino-acid chain; its full sequence is Protein SYM1 (175 aa).

A run of 3 helical transmembrane segments spans residues 55-75 (MALY…AFLA), 92-112 (VACD…SSMA), and 143-163 (VINF…IIAI).

The protein belongs to the peroxisomal membrane protein PXMP2/4 family.

The protein localises to the mitochondrion inner membrane. May be involved in cellular response to stress. Required to maintain mitochondrial DNA (mtDNA) integrity and stability. This chain is Protein SYM1 (SYM1), found in Gibberella zeae (strain ATCC MYA-4620 / CBS 123657 / FGSC 9075 / NRRL 31084 / PH-1) (Wheat head blight fungus).